Reading from the N-terminus, the 267-residue chain is Neutrophil elastase (267 aa).

The N-terminal stretch at 1–27 (MTLGRRLACLFLACVLPALLLGGTALA) is a signal peptide. A propeptide spanning residues 28-29 (SE) is cleaved from the precursor. The 218-residue stretch at 30-247 (IVGGRRARPH…FVNWIDSIIQ (218 aa)) folds into the Peptidase S1 domain. C55 and C71 are disulfide-bonded. H70 (charge relay system) is an active-site residue. N-linked (GlcNAc...) asparagine glycosylation is present at N88. D117 (charge relay system) is an active-site residue. N-linked (GlcNAc...) asparagine glycosylation is found at N124 and N173. 3 cysteine pairs are disulfide-bonded: C151/C208, C181/C187, and C198/C223. The active-site Charge relay system is S202.

Belongs to the peptidase S1 family. Elastase subfamily. In terms of assembly, interacts with NOTCH2NL. Interacts with agaphelin, an antihemostatic protein from Anopheles gambiae. Bone marrow cells. Neutrophil.

The protein localises to the cytoplasmic vesicle. It localises to the phagosome. The catalysed reaction is Hydrolysis of proteins, including elastin. Preferential cleavage: Val-|-Xaa &gt; Ala-|-Xaa.. In terms of biological role, serine protease that modifies the functions of natural killer cells, monocytes and granulocytes. Inhibits C5a-dependent neutrophil enzyme release and chemotaxis. Promotes cleavage of GSDMB, thereby inhibiting pyroptosis. Promotes blood coagulation. Through the activation of the platelet fibrinogen receptor integrin alpha-IIb/beta-3, potentiates platelet aggregation induced by a threshold concentration of cathepsin G (CTSG). Cleaves and thus inactivates tissue factor pathway inhibitor (TFPI). Capable of killing E.coli but not S.aureus in vitro; digests outer membrane protein A (ompA) in E.coli and K.pneumoniae. This chain is Neutrophil elastase (ELANE), found in Homo sapiens (Human).